The primary structure comprises 305 residues: UDP-3-O-acyl-N-acetylglucosamine deacetylase (305 aa).

Zn(2+) contacts are provided by His-78, His-237, and Asp-241. The Proton donor role is filled by His-264.

It belongs to the LpxC family. Zn(2+) is required as a cofactor.

The catalysed reaction is a UDP-3-O-[(3R)-3-hydroxyacyl]-N-acetyl-alpha-D-glucosamine + H2O = a UDP-3-O-[(3R)-3-hydroxyacyl]-alpha-D-glucosamine + acetate. The protein operates within glycolipid biosynthesis; lipid IV(A) biosynthesis; lipid IV(A) from (3R)-3-hydroxytetradecanoyl-[acyl-carrier-protein] and UDP-N-acetyl-alpha-D-glucosamine: step 2/6. Functionally, catalyzes the hydrolysis of UDP-3-O-myristoyl-N-acetylglucosamine to form UDP-3-O-myristoylglucosamine and acetate, the committed step in lipid A biosynthesis. The protein is UDP-3-O-acyl-N-acetylglucosamine deacetylase of Burkholderia cenocepacia (strain ATCC BAA-245 / DSM 16553 / LMG 16656 / NCTC 13227 / J2315 / CF5610) (Burkholderia cepacia (strain J2315)).